Here is a 201-residue protein sequence, read N- to C-terminus: Small ribosomal subunit protein uS4c (201 aa).

In terms of domain architecture, S4 RNA-binding spans M89 to L152.

This sequence belongs to the universal ribosomal protein uS4 family. As to quaternary structure, part of the 30S ribosomal subunit. Contacts protein S5. The interaction surface between S4 and S5 is involved in control of translational fidelity.

It localises to the plastid. It is found in the chloroplast. In terms of biological role, one of the primary rRNA binding proteins, it binds directly to 16S rRNA where it nucleates assembly of the body of the 30S subunit. With S5 and S12 plays an important role in translational accuracy. The sequence is that of Small ribosomal subunit protein uS4c (rps4) from Olimarabidopsis pumila (Dwarf rocket).